A 155-amino-acid chain; its full sequence is Chaperone protein IpgC (155 aa).

Belongs to the LcrH/SycD chaperone family.

The protein localises to the cytoplasm. Functionally, assists the correct folding of nascent IpaB. Once it is bound to IpaB, it binds to IpaC and impedes their premature association that would lead to their degradation in the absence of IpcG. The protein is Chaperone protein IpgC (ipgC) of Shigella dysenteriae.